Here is a 452-residue protein sequence, read N- to C-terminus: Chromosomal replication initiator protein DnaA (452 aa).

A domain I, interacts with DnaA modulators region spans residues 1-84 (MTENEQIFWN…SIEYVFEETQ (84 aa)). Positions 84-110 (QSTSNSPQISQNKTAELATETLPFVQN) are domain II. The interval 111–329 (DLNPKYSFDN…GALKDISLVA (219 aa)) is domain III, AAA+ region. The ATP site is built by Gly-155, Gly-157, Lys-158, and Thr-159. Residues 330–452 (NFKKLDVITV…EMETIKNKIK (123 aa)) form a domain IV, binds dsDNA region.

Belongs to the DnaA family. Oligomerizes as a right-handed, spiral filament on DNA at oriC.

The protein resides in the cytoplasm. Its function is as follows. Plays an essential role in the initiation and regulation of chromosomal replication. ATP-DnaA binds to the origin of replication (oriC) to initiate formation of the DNA replication initiation complex once per cell cycle. Binds the DnaA box (a 9 base pair repeat at the origin) and separates the double-stranded (ds)DNA. Forms a right-handed helical filament on oriC DNA; dsDNA binds to the exterior of the filament while single-stranded (ss)DNA is stabiized in the filament's interior. The ATP-DnaA-oriC complex binds and stabilizes one strand of the AT-rich DNA unwinding element (DUE), permitting loading of DNA polymerase. After initiation quickly degrades to an ADP-DnaA complex that is not apt for DNA replication. Binds acidic phospholipids. The polypeptide is Chromosomal replication initiator protein DnaA (Streptococcus mutans serotype c (strain ATCC 700610 / UA159)).